Consider the following 722-residue polypeptide: Delta-like protein 1 (722 aa).

The N-terminal stretch at 1 to 17 is a signal peptide; sequence MGRRSALALAVVSALLC. Over 18–545 the chain is Extracellular; it reads QVWSSGVFEL…MESQGGPFPW (528 aa). The DSL domain maps to 176-220; it reads FVCDEHYYGEGCSVFCRPRDDAFGHFTCGDRGEKMCDPGWKGQYC. Cystine bridges form between Cys178/Cys187, Cys191/Cys203, Cys211/Cys220, Cys225/Cys236, Cys229/Cys242, Cys244/Cys253, Cys256/Cys267, Cys262/Cys273, Cys275/Cys284, Cys291/Cys303, Cys297/Cys313, Cys315/Cys324, Cys331/Cys342, Cys336/Cys351, Cys353/Cys362, Cys369/Cys380, Cys374/Cys390, Cys392/Cys401, Cys408/Cys419, Cys413/Cys428, Cys430/Cys439, Cys446/Cys457, Cys451/Cys466, Cys468/Cys477, Cys484/Cys495, Cys489/Cys504, and Cys506/Cys515. EGF-like domains are found at residues 225-253, 256-284, and 291-324; these read CLPG…GRYC, CIRY…GLFC, and CTHH…GANC. The EGF-like 4; calcium-binding domain occupies 331–362; it reads CAPSPCKNGASCTDLEDSFSCTCPPGFYGKVC. EGF-like domains are found at residues 369 to 401 and 408 to 439; these read CADG…GFNC and CGSS…GRYC. Positions 446–477 constitute an EGF-like 7; calcium-binding domain; that stretch reads CASSPCANGGTCRDSVNDFSCTCPPGYTGKNC. Asn476 carries N-linked (GlcNAc...) asparagine glycosylation. The EGF-like 8 domain maps to 484–515; the sequence is CEHAPCHNGATCHQRGQRYMCECAQGYGGPNC. Residues 546 to 568 traverse the membrane as a helical segment; the sequence is VAVCAGVVLVLLLLLGCAAVVVC. Over 569 to 722 the chain is Cytoplasmic; sequence VRLKLQKHQP…KDECVIATEV (154 aa). Lys613 is covalently cross-linked (Glycyl lysine isopeptide (Lys-Gly) (interchain with G-Cter in ubiquitin)). Residue Thr638 is modified to Phosphothreonine. Residues 655 to 664 are compositionally biased toward basic and acidic residues; that stretch reads RDTHSKRDTK. The tract at residues 655–697 is disordered; the sequence is RDTHSKRDTKCQSQSSAGEEKIAPTLRGGEIPDRKRPESVYST. At Ser693 the chain carries Phosphoserine; by PKB. Position 696 is a phosphoserine (Ser696). The tract at residues 719-722 is interaction with MAGI1; that stretch reads ATEV.

Homodimer. Interacts with TJP1. Interacts with MMP14; inhibits DLL1-induced Notch signaling. Interacts with MAGI1 (via PDZ domain); forms a complex with CTNNB1 and CDH2 and promotes recruitment to the adherens junction and stabilization on the cell surface. Interacts with PSEN1; undergoes a presenilin-dependent gamma-secretase cleavage that releases a Dll1-intracellular form. Interacts with MFAP5. Interacts with MIB1. Interacts with NEURL1B; leads to ubiquitination. Interacts with NEURL1. Interacts with SYNJ2BP; enhances DLL1 protein stability, and promotes Notch signaling in endothelial cells. Interacts with MAGI1, MAGI2, MAGI3 and MPDZ. Interacts (via ubiquitin) with EPN1 (via IUM domain); binding with NOTCH1 attached to neighboring cell, promotes ligand ubiquitination and EPN1 interaction, leading to NECD transendocytosis and Notch signaling. Interacts with NOTCH1. In terms of processing, ubiquitinated by MIB (MIB1 or MIB2), leading to its endocytosis and subsequent degradation. Ubiquitinated; promotes recycling back to the plasma membrane and confers a strong affinity for NOTCH1. Multi-ubiquitination of Lys-613 by MIB1 promotes both cis and trans-interaction with NOTCH1, as well as activation of Notch signaling. Ubiquitinated by NEURL1B. Post-translationally, phosphorylated in a membrane association-dependent manner. Phosphorylation at Ser-696 requires the presence of Ser-693, whereas phosphorylation at Thr-638 and Ser-693 occurs independently of the other sites. Phosphorylation is required for full ligand activity in vitro and affects surface presentation, ectodomain shedding, and endocytosis. Cleaved by MMP14; negatively regulates DLL1-induced Notch signaling in HPCs, modulating B-lymphocyte differentiation in bone marrow. Undergoes two consecutive processing events: a shedding event, partially by ADAM10, that generates a soluble extracellular form and an intracellular membrane-anchored form, followed by a gamma-secretase cleavage releasing an intracellular fragment. In terms of processing, O-fucosylated. Can be elongated to a disaccharide by MFNG. As to expression, in the embryo, expressed in the paraxial mesoderm and nervous system. Expressed at high levels in adult heart and at lower levels, in adult lung. Highly expressed in satellite cells from masseter and tongue than in satellite cells from leg and extraocular muscle.?.

Its subcellular location is the apical cell membrane. It is found in the cell junction. The protein localises to the adherens junction. The protein resides in the membrane raft. It localises to the cell membrane. Its subcellular location is the nucleus. Functionally, transmembrane ligand protein of NOTCH1, NOTCH2 and NOTCH3 receptors that binds the extracellular domain (ECD) of Notch receptor in a cis and trans fashion manner. Following transinteraction, ligand cells produce mechanical force that depends of a clathrin-mediated endocytosis, requiring ligand ubiquitination, EPN1 interaction, and actin polymerisation; these events promote Notch receptor extracellular domain (NECD) transendocytosis and triggers Notch signaling through induction of cleavage, hyperphosphorylation, and nuclear accumulation of the intracellular domain of Notch receptors (NICD). Is required for embryonic development and maintenance of adult stem cells in many different tissues and immune systeme; the DLL1-induced Notch signaling is mediated through an intercellular communication that regulates cell lineage, cell specification, cell patterning and morphogenesis through effects on differentiation and proliferation. Plays a role in brain development at different level, namely by regulating neuronal differentiation of neural precursor cells via cell-cell interaction, most likely through the lateral inhibitory system in an endogenous level dependent-manner. During neocortex development, Dll1-Notch signaling transmission is mediated by dynamic interactions between intermediate neurogenic progenitors and radial glia; the cell-cell interactions are mediated via dynamic and transient elongation processes, likely to reactivate/maintain Notch activity in neighboring progenitors, and coordinate progenitor cell division and differentiation across radial and zonal boundaries. During cerebellar development, regulates Bergmann glial monolayer formation and its morphological maturation through a Notch signaling pathway. At the retina and spinal cord level, regulates neurogenesis by preventing the premature differentiation of neural progenitors and also by maintaining progenitors in spinal cord through Notch signaling pathway. Also controls neurogenesis of the neural tube in a progenitor domain-specific fashion along the dorsoventral axis. Maintains quiescence of neural stem cells and plays a role as a fate determinant that segregates asymmetrically to one daughter cell during neural stem cells mitosis, resulting in neuronal differentiation in Dll1-inheriting cell. Plays a role in immune systeme development, namely the development of all T-cells and marginal zone (MZ) B cells. Blocks the differentiation of progenitor cells into the B-cell lineage while promoting the emergence of a population of cells with the characteristics of a T-cell/NK-cell precursor. Upon MMP14 cleavage, negatively regulates Notch signaling in haematopoietic progenitor cells to specifically maintain normal B-cell development in bone marrow. Also plays a role during muscle development. During early development, inhibits myoblasts differentiation from the medial dermomyotomal lip and later regulates progenitor cell differentiation. Directly modulates cell adhesion and basal lamina formation in satellite cells through Notch signaling. Maintains myogenic progenitors pool by suppressing differentiation through down-regulation of MYOD1 and is required for satellite cell homing and PAX7 expression. During craniofacial and trunk myogenesis suppresses differentiation of cranial mesoderm-derived and somite-derived muscle via MYOD1 regulation but in cranial mesoderm-derived progenitors, is neither required for satellite cell homing nor for PAX7 expression. Also plays a role during pancreatic cell development. During type B pancreatic cell development, may be involved in the initiation of proximodistal patterning in the early pancreatic epithelium. Stimulates multipotent pancreatic progenitor cells proliferation and pancreatic growth by maintaining HES1 expression and PTF1A protein levels. During fetal stages of development, is required to maintain arterial identity and the responsiveness of arterial endothelial cells for VEGFA through regulation of KDR activation and NRP1 expression. Controls sprouting angiogenesis and subsequent vertical branch formation through regulation on tip cell differentiation. Negatively regulates goblet cell differentiation in intestine and controls secretory fat commitment through lateral inhibition in small intestine. Plays a role during inner ear development; negatively regulates auditory hair cell differentiation. Plays a role during nephron development through Notch signaling pathway. Regulates growth, blood pressure and energy homeostasis. The chain is Delta-like protein 1 (Dll1) from Mus musculus (Mouse).